The following is a 168-amino-acid chain: MRVLGIDPGLRNMGWGVIDVSGTRLAHVANGICHSDSGDLAQRLLSLHGQLTDVLARFQPDTAAVEHTFVNKDGVATLKLGQARGIALLVPAQAGLAVGEYAPNAVKKTVVGVGHAAKEQIQHMVRLHLPGVALAGPDAADALAVAICHAHHVQSSGRLEAALARAAR.

Residues D7, E66, and D138 contribute to the active site. Mg(2+)-binding residues include D7, E66, and D138.

It belongs to the RuvC family. In terms of assembly, homodimer which binds Holliday junction (HJ) DNA. The HJ becomes 2-fold symmetrical on binding to RuvC with unstacked arms; it has a different conformation from HJ DNA in complex with RuvA. In the full resolvosome a probable DNA-RuvA(4)-RuvB(12)-RuvC(2) complex forms which resolves the HJ. Requires Mg(2+) as cofactor.

It is found in the cytoplasm. It catalyses the reaction Endonucleolytic cleavage at a junction such as a reciprocal single-stranded crossover between two homologous DNA duplexes (Holliday junction).. In terms of biological role, the RuvA-RuvB-RuvC complex processes Holliday junction (HJ) DNA during genetic recombination and DNA repair. Endonuclease that resolves HJ intermediates. Cleaves cruciform DNA by making single-stranded nicks across the HJ at symmetrical positions within the homologous arms, yielding a 5'-phosphate and a 3'-hydroxyl group; requires a central core of homology in the junction. The consensus cleavage sequence is 5'-(A/T)TT(C/G)-3'. Cleavage occurs on the 3'-side of the TT dinucleotide at the point of strand exchange. HJ branch migration catalyzed by RuvA-RuvB allows RuvC to scan DNA until it finds its consensus sequence, where it cleaves and resolves the cruciform DNA. This chain is Crossover junction endodeoxyribonuclease RuvC, found in Cereibacter sphaeroides (strain ATCC 17029 / ATH 2.4.9) (Rhodobacter sphaeroides).